The primary structure comprises 73 residues: Omega-hexatoxin-Ar1b (73 aa).

The signal sequence occupies residues 1–22 (MNTATGFIVLLVLATVLGCIEA). Positions 23–37 (GESHVREDAMGRARR) are excised as a propeptide. 3 disulfide bridges follow: cysteine 40/cysteine 54, cysteine 47/cysteine 58, and cysteine 53/cysteine 72.

Belongs to the neurotoxin 08 (Shiva) family. 01 (omega toxin) subfamily. Expressed by the venom gland.

It localises to the secreted. Functionally, insecticidal toxin that reversibly and voltage-independently blocks both mid-low- (M-LVA) and high-voltage-activated (HVA) calcium channels (Cav) in cockroach DUM neurons. Also causes a modest block of insect sodium channel currents (Nav). Induces potent excitatory symptoms, followed by flaccid paralysis leading to death in house crickets. This is Omega-hexatoxin-Ar1b from Atrax robustus (Sydney funnel-web spider).